The following is a 391-amino-acid chain: Probable FAD-dependent oxidoreductase PA4991 (391 aa).

Residues Ala-17, Glu-36, 44-45, 49-51, and 346-347 each bind FAD; these read QS, QGI, and LA.

It belongs to the DAO family. In terms of assembly, monomer. It depends on FAD as a cofactor.

Probably functions as a FAD-dependent oxidoreductase, whose physiological substrate is unknown. Does not display amino-acid oxidase or glycerol-3-phosphate dehydrogenase activities. Is essential for growth of P.aeruginosa in the sputum of cystic fibrosis patients. The polypeptide is Probable FAD-dependent oxidoreductase PA4991 (Pseudomonas aeruginosa (strain ATCC 15692 / DSM 22644 / CIP 104116 / JCM 14847 / LMG 12228 / 1C / PRS 101 / PAO1)).